A 70-amino-acid polypeptide reads, in one-letter code: SPbeta prophage-derived uncharacterized protein YorZ (70 aa).

The sequence is that of SPbeta prophage-derived uncharacterized protein YorZ (yorZ) from Bacillus subtilis (strain 168).